The sequence spans 195 residues: Putative manganese efflux pump MntP (195 aa).

6 consecutive transmembrane segments (helical) span residues 4–24, 39–59, 64–84, 120–140, 145–165, and 175–195; these read ILIT…SLAM, FVLT…NLGL, FLGV…GWQM, ILLL…TLGT, ILIT…VGFA, and GSYA…KFVV.

The protein belongs to the MntP (TC 9.B.29) family.

It is found in the cell membrane. In terms of biological role, probably functions as a manganese efflux pump. This is Putative manganese efflux pump MntP from Syntrophomonas wolfei subsp. wolfei (strain DSM 2245B / Goettingen).